Reading from the N-terminus, the 149-residue chain is Ribonuclease H (149 aa).

The RNase H type-1 domain maps to methionine 1 to aspartate 143. The Mg(2+) site is built by aspartate 9, glutamate 47, aspartate 69, and aspartate 135.

This sequence belongs to the RNase H family. As to quaternary structure, monomer. Mg(2+) serves as cofactor.

It is found in the cytoplasm. It carries out the reaction Endonucleolytic cleavage to 5'-phosphomonoester.. Endonuclease that specifically degrades the RNA of RNA-DNA hybrids. The sequence is that of Ribonuclease H from Paracidovorax citrulli (strain AAC00-1) (Acidovorax citrulli).